Reading from the N-terminus, the 211-residue chain is LexA repressor (211 aa).

Positions 31-51 (RAEISKELGFRSPNAAEEHLK) form a DNA-binding region, H-T-H motif. Active-site for autocatalytic cleavage activity residues include Ser127 and Lys164.

This sequence belongs to the peptidase S24 family. In terms of assembly, homodimer.

The catalysed reaction is Hydrolysis of Ala-|-Gly bond in repressor LexA.. In terms of biological role, represses a number of genes involved in the response to DNA damage (SOS response), including recA and lexA. In the presence of single-stranded DNA, RecA interacts with LexA causing an autocatalytic cleavage which disrupts the DNA-binding part of LexA, leading to derepression of the SOS regulon and eventually DNA repair. The sequence is that of LexA repressor from Pasteurella multocida (strain Pm70).